Reading from the N-terminus, the 406-residue chain is Phosphorylase b kinase gamma catalytic chain, liver/testis isoform (406 aa).

One can recognise a Protein kinase domain in the interval 24–291 (YDPKDIIGRG…AEQALQHPFF (268 aa)). ATP-binding positions include 30-38 (IGRGVSSVV) and Lys-53. The active-site Proton acceptor is the Asp-153. The interval 306–330 (QRFRVAVWTILAAGRVALSSHRLRP) is calmodulin-binding (domain-N). The tract at residues 346 to 370 (VRRLIDNCAFRLYGHWVKKGEQQNR) is calmodulin-binding (domain-C).

This sequence belongs to the protein kinase superfamily. CAMK Ser/Thr protein kinase family. As to quaternary structure, hexadecamer of 4 heterotetramers, each composed of alpha, beta, gamma, and delta subunits. Alpha (PHKA1 or PHKA2) and beta (PHKB) are regulatory subunits, gamma (PHKG1 or PHKG2) is the catalytic subunit, and delta is calmodulin.

It carries out the reaction 2 ATP + phosphorylase b = 2 ADP + phosphorylase a.. In terms of biological role, catalytic subunit of the phosphorylase b kinase (PHK), which mediates the neural and hormonal regulation of glycogen breakdown (glycogenolysis) by phosphorylating and thereby activating glycogen phosphorylase. May regulate glycogeneolysis in the testis. In vitro, phosphorylates PYGM. The protein is Phosphorylase b kinase gamma catalytic chain, liver/testis isoform (Phkg2) of Rattus norvegicus (Rat).